A 239-amino-acid chain; its full sequence is Orotidine 5'-phosphate decarboxylase (239 aa).

Residues D10, K33, 60–69, T124, R186, Q195, G215, and R216 each bind substrate; that span reads DLKLYDIPNT. K62 acts as the Proton donor in catalysis.

Belongs to the OMP decarboxylase family. Type 1 subfamily. In terms of assembly, homodimer.

The enzyme catalyses orotidine 5'-phosphate + H(+) = UMP + CO2. The protein operates within pyrimidine metabolism; UMP biosynthesis via de novo pathway; UMP from orotate: step 2/2. In terms of biological role, catalyzes the decarboxylation of orotidine 5'-monophosphate (OMP) to uridine 5'-monophosphate (UMP). In Latilactobacillus sakei subsp. sakei (strain 23K) (Lactobacillus sakei subsp. sakei), this protein is Orotidine 5'-phosphate decarboxylase.